A 111-amino-acid polypeptide reads, in one-letter code: Probable 4-amino-4-deoxy-L-arabinose-phosphoundecaprenol flippase subunit ArnE (111 aa).

3 consecutive transmembrane segments (helical) span residues 38-58 (LWLGLALICMGAAMVLWLLVL), 61-81 (LPVGIAYPMLSLNFVWVTLAA), and 91-111 (PRHWLGVALIISGIIILGSAA). Residues 40–109 (LGLALICMGA…IISGIIILGS (70 aa)) form the EamA domain.

The protein belongs to the ArnE family. In terms of assembly, heterodimer of ArnE and ArnF.

It localises to the cell inner membrane. Its pathway is bacterial outer membrane biogenesis; lipopolysaccharide biosynthesis. Functionally, translocates 4-amino-4-deoxy-L-arabinose-phosphoundecaprenol (alpha-L-Ara4N-phosphoundecaprenol) from the cytoplasmic to the periplasmic side of the inner membrane. This chain is Probable 4-amino-4-deoxy-L-arabinose-phosphoundecaprenol flippase subunit ArnE, found in Salmonella newport (strain SL254).